We begin with the raw amino-acid sequence, 134 residues long: Putative nickel-responsive regulator (134 aa).

Positions 78, 89, 91, and 97 each coordinate Ni(2+).

Belongs to the transcriptional regulatory CopG/NikR family. Ni(2+) serves as cofactor.

In terms of biological role, transcriptional regulator. The chain is Putative nickel-responsive regulator from Chlorobium phaeobacteroides (strain DSM 266 / SMG 266 / 2430).